Reading from the N-terminus, the 86-residue chain is MKKIGVESGLSAIADYLKNEGYSVELLGGNLENNAAKCDSFDAVVTADYNTNMMGFCNTSTKTPIVNASGLTREEVKNMIEQKTSR.

This sequence belongs to the UPF0180 family.

This is UPF0180 protein CA_C1486 from Clostridium acetobutylicum (strain ATCC 824 / DSM 792 / JCM 1419 / IAM 19013 / LMG 5710 / NBRC 13948 / NRRL B-527 / VKM B-1787 / 2291 / W).